The chain runs to 558 residues: Dihydroxy-acid dehydratase (558 aa).

Asp78 provides a ligand contact to Mg(2+). Cys119 contacts [2Fe-2S] cluster. The Mg(2+) site is built by Asp120 and Lys121. Lys121 is subject to N6-carboxylysine. Cys192 contributes to the [2Fe-2S] cluster binding site. Glu446 contacts Mg(2+). The Proton acceptor role is filled by Ser472.

Belongs to the IlvD/Edd family. As to quaternary structure, homodimer. It depends on [2Fe-2S] cluster as a cofactor. Requires Mg(2+) as cofactor.

It catalyses the reaction (2R)-2,3-dihydroxy-3-methylbutanoate = 3-methyl-2-oxobutanoate + H2O. The catalysed reaction is (2R,3R)-2,3-dihydroxy-3-methylpentanoate = (S)-3-methyl-2-oxopentanoate + H2O. It participates in amino-acid biosynthesis; L-isoleucine biosynthesis; L-isoleucine from 2-oxobutanoate: step 3/4. Its pathway is amino-acid biosynthesis; L-valine biosynthesis; L-valine from pyruvate: step 3/4. Functionally, functions in the biosynthesis of branched-chain amino acids. Catalyzes the dehydration of (2R,3R)-2,3-dihydroxy-3-methylpentanoate (2,3-dihydroxy-3-methylvalerate) into 2-oxo-3-methylpentanoate (2-oxo-3-methylvalerate) and of (2R)-2,3-dihydroxy-3-methylbutanoate (2,3-dihydroxyisovalerate) into 2-oxo-3-methylbutanoate (2-oxoisovalerate), the penultimate precursor to L-isoleucine and L-valine, respectively. The chain is Dihydroxy-acid dehydratase from Campylobacter jejuni subsp. doylei (strain ATCC BAA-1458 / RM4099 / 269.97).